A 79-amino-acid polypeptide reads, in one-letter code: Small ribosomal subunit protein uS17 (79 aa).

It belongs to the universal ribosomal protein uS17 family. In terms of assembly, part of the 30S ribosomal subunit.

In terms of biological role, one of the primary rRNA binding proteins, it binds specifically to the 5'-end of 16S ribosomal RNA. This is Small ribosomal subunit protein uS17 from Bartonella henselae (strain ATCC 49882 / DSM 28221 / CCUG 30454 / Houston 1) (Rochalimaea henselae).